The primary structure comprises 80 residues: DNA-binding protein HU-like (80 aa).

This sequence belongs to the bacterial histone-like protein family.

Functionally, histone-like DNA-binding protein which is capable of wrapping DNA to stabilize it, and thus to prevent its denaturation under extreme environmental conditions. This Rickettsia conorii (strain ATCC VR-613 / Malish 7) protein is DNA-binding protein HU-like.